We begin with the raw amino-acid sequence, 269 residues long: Formamidopyrimidine-DNA glycosylase (269 aa).

The active-site Schiff-base intermediate with DNA is the P2. E3 acts as the Proton donor in catalysis. K57 (proton donor; for beta-elimination activity) is an active-site residue. The DNA site is built by H90, R109, and K150. Residues 235–269 (QVYGRKGEPCRVCGTPIVATKHAQRATFYCRHCQK) form an FPG-type zinc finger. Residue R259 is the Proton donor; for delta-elimination activity of the active site.

Belongs to the FPG family. As to quaternary structure, monomer. Zn(2+) serves as cofactor.

The catalysed reaction is Hydrolysis of DNA containing ring-opened 7-methylguanine residues, releasing 2,6-diamino-4-hydroxy-5-(N-methyl)formamidopyrimidine.. The enzyme catalyses 2'-deoxyribonucleotide-(2'-deoxyribose 5'-phosphate)-2'-deoxyribonucleotide-DNA = a 3'-end 2'-deoxyribonucleotide-(2,3-dehydro-2,3-deoxyribose 5'-phosphate)-DNA + a 5'-end 5'-phospho-2'-deoxyribonucleoside-DNA + H(+). In terms of biological role, involved in base excision repair of DNA damaged by oxidation or by mutagenic agents. Acts as a DNA glycosylase that recognizes and removes damaged bases. Has a preference for oxidized purines, such as 7,8-dihydro-8-oxoguanine (8-oxoG). Has AP (apurinic/apyrimidinic) lyase activity and introduces nicks in the DNA strand. Cleaves the DNA backbone by beta-delta elimination to generate a single-strand break at the site of the removed base with both 3'- and 5'-phosphates. The protein is Formamidopyrimidine-DNA glycosylase of Salmonella newport (strain SL254).